A 473-amino-acid polypeptide reads, in one-letter code: H(+)/Cl(-) exchange transporter ClcA (473 aa).

The Cytoplasmic portion of the chain corresponds to 1 to 32; sequence MKTDTSTFLAQQIVRLRRRDQIRRLMQRDKTP. A helical membrane pass occupies residues 33–69; that stretch reads LAILFMAAVVGTLTGLVGVAFEKTVSWVQNMRIGALV. Topologically, residues 70–76 are periplasmic; that stretch reads QVADHAF. Residues 77–100 form a helical membrane-spanning segment; the sequence is LLWPLAFILSALLAMVGYFLVRKF. The Selectivity filter part_1 signature appears at 106 to 110; sequence GSGIP. Ser-107 is a chloride binding site. Positions 109 to 116 form an intramembrane region, helical; it reads IPEIEGAL. Residues 117–123 are Cytoplasmic-facing; the sequence is EELRPVR. 2 helical membrane-spanning segments follow: residues 124–141 and 148–166; these read WWRV…TLGA and EGPT…LDVF. Residues 146–150 carry the Selectivity filter part_2 motif; it reads GREGP. Over 167-176 the chain is Cytoplasmic; that stretch reads RMRSAEARHT. 2 intramembrane regions (helical) span residues 177-189 and 193-201; these read LLAT…LSAA and PLAGILFII. Topologically, residues 202–214 are cytoplasmic; sequence EEMRPQFRYNLIS. A helical membrane pass occupies residues 215 to 232; it reads IKAVFTGVIMSSIVFRIF. The Periplasmic portion of the chain corresponds to 233 to 252; the sequence is NGEAPIIEVGKLSDAPVNTL. A helical membrane pass occupies residues 253–281; it reads WLYLILGIIFGCVGPVFNSLVLRTQDMFQ. Topologically, residues 282–287 are cytoplasmic; sequence RFHGGE. Residues 288–309 form a helical membrane-spanning segment; it reads IKKWVLMGGAIGGLCGILGLIE. The Periplasmic portion of the chain corresponds to 310–329; the sequence is PAAAGGGFNLIPIAAAGNFS. Helical transmembrane passes span 330-349 and 355-376; these read VGLL…LCFS and GIFA…MAAA. Positions 355–359 match the Selectivity filter part_3 motif; it reads GIFAP. 2 residues coordinate chloride: Ile-356 and Phe-357. The Periplasmic segment spans residues 377 to 386; that stretch reads VLFPQYHPEA. The helical intramembrane region spans 387 to 401; the sequence is GTFAIAGMGALMAAS. Positions 402 to 404 form an intramembrane region, note=Loop between two helices; sequence VRA. The helical intramembrane region spans 405–416; that stretch reads PLTGIVLVLEMT. Positions 417 to 421 form an intramembrane region, note=Loop between two helices; that stretch reads DNYQL. The helical transmembrane segment at 422–438 threads the bilayer; that stretch reads ILPMIITCLGATLLAQF. Over 439 to 473 the chain is Cytoplasmic; that stretch reads LGGKPLYSTILARTLAKQDAEQAAKNQNAPAGENT. Tyr-445 contacts chloride.

The protein belongs to the chloride channel (TC 2.A.49) family. ClcA subfamily. In terms of assembly, homodimer.

Its subcellular location is the cell inner membrane. It carries out the reaction 2 chloride(in) + H(+)(out) = 2 chloride(out) + H(+)(in). Its function is as follows. Proton-coupled chloride transporter. Functions as antiport system and exchanges two chloride ions for 1 proton. Probably acts as an electrical shunt for an outwardly-directed proton pump that is linked to amino acid decarboxylation, as part of the extreme acid resistance (XAR) response. In Salmonella paratyphi A (strain AKU_12601), this protein is H(+)/Cl(-) exchange transporter ClcA.